A 204-amino-acid chain; its full sequence is Peptide deformylase (204 aa).

Positions 131 and 174 each coordinate Fe cation. Glu175 is a catalytic residue. His178 lines the Fe cation pocket.

The protein belongs to the polypeptide deformylase family. Requires Fe(2+) as cofactor.

It carries out the reaction N-terminal N-formyl-L-methionyl-[peptide] + H2O = N-terminal L-methionyl-[peptide] + formate. Functionally, removes the formyl group from the N-terminal Met of newly synthesized proteins. Requires at least a dipeptide for an efficient rate of reaction. N-terminal L-methionine is a prerequisite for activity but the enzyme has broad specificity at other positions. This chain is Peptide deformylase, found in Streptococcus equi subsp. zooepidemicus (strain H70).